Here is a 192-residue protein sequence, read N- to C-terminus: Small ribosomal subunit protein uS5 (192 aa).

The disordered stretch occupies residues 1–21 (MAAERERGGRERGGRDRDERD). The S5 DRBM domain occupies 24 to 87 (FVDKLVHINR…DSAKRNLTRV (64 aa)).

The protein belongs to the universal ribosomal protein uS5 family. In terms of assembly, part of the 30S ribosomal subunit. Contacts proteins S4 and S8.

Functionally, with S4 and S12 plays an important role in translational accuracy. Its function is as follows. Located at the back of the 30S subunit body where it stabilizes the conformation of the head with respect to the body. This is Small ribosomal subunit protein uS5 from Afipia carboxidovorans (strain ATCC 49405 / DSM 1227 / KCTC 32145 / OM5) (Oligotropha carboxidovorans).